The primary structure comprises 224 residues: Probable GTP-binding protein EngB (224 aa).

The 174-residue stretch at 31 to 204 (VGVEIAFAGR…LGILDQWCKP (174 aa)) folds into the EngB-type G domain. Residues 39–46 (GRSNAGKS), 65–69 (GRTQL), 83–86 (DLPG), 150–153 (TKAD), and 183–185 (FSS) contribute to the GTP site. Residues serine 46 and threonine 67 each contribute to the Mg(2+) site.

The protein belongs to the TRAFAC class TrmE-Era-EngA-EngB-Septin-like GTPase superfamily. EngB GTPase family. Mg(2+) serves as cofactor.

Functionally, necessary for normal cell division and for the maintenance of normal septation. The polypeptide is Probable GTP-binding protein EngB (Shewanella piezotolerans (strain WP3 / JCM 13877)).